Reading from the N-terminus, the 758-residue chain is Deoxynucleotidyltransferase terminal-interacting protein 2 (758 aa).

Over residues 1 to 21 the composition is skewed to polar residues; the sequence is MVVTRSGLSRTRLQESSQQKR. The disordered stretch occupies residues 1–176; sequence MVVTRSGLSR…SQSGTVSDAE (176 aa). Phosphoserine occurs at positions 17, 133, 137, and 140. A compositionally biased stretch (low complexity) spans 128-143; it reads DEVVVSEAESHVSGVS. Positions 155–172 are enriched in polar residues; the sequence is NKANSQRDSSQESQSGTV. Residues Ser173 and Ser183 each carry the phosphoserine modification. Lys210 participates in a covalent cross-link: Glycyl lysine isopeptide (Lys-Gly) (interchain with G-Cter in SUMO2). Residues Ser229, Ser240, Ser248, and Ser255 each carry the phosphoserine modification. Residues 231–255 are compositionally biased toward polar residues; it reads ATQLSARPLSQRNMPNVSDSETYNS. 4 disordered regions span residues 231-277, 312-353, 377-480, and 501-552; these read ATQL…HQNL, KVIN…QLSS, DKRG…AEDL, and DKNF…DLLS. Lys317 is covalently cross-linked (Glycyl lysine isopeptide (Lys-Gly) (interchain with G-Cter in SUMO2)). The segment covering 321–353 has biased composition (polar residues); sequence RSLSEAQDTSLQQSVSQNHSSTPNKKPTFQLSS. Phosphoserine occurs at positions 324 and 330. Residues Lys345 and Lys384 each participate in a glycyl lysine isopeptide (Lys-Gly) (interchain with G-Cter in SUMO2) cross-link. A compositionally biased stretch (basic and acidic residues) spans 377 to 387; it reads DKRGGSGKKSD. The segment covering 431–440 has biased composition (polar residues); it reads LSMTQDTTDS. Over residues 447-456 the composition is skewed to low complexity; it reads SSDESQQSDS. Phosphoserine is present on residues Ser476 and Ser512. Positions 512–541 form a coiled coil; sequence SEVAIEEEKEEEEKEEENSEEDSSDSDENK. Positions 515 to 550 are enriched in acidic residues; sequence AIEEEKEEEEKEEENSEEDSSDSDENKDESSDEEDL. The segment at 550–607 is tdBR region; mediates interaction with DNTT; sequence LLSNTKSKLLKLTSSSIDPGLNIKQLGGLYINFNVDKLQPHKETLTQIKEKKKNELLQ. Residues Lys560, Lys586, and Lys608 each participate in a glycyl lysine isopeptide (Lys-Gly) (interchain with G-Cter in SUMO2) cross-link. At Thr612 the chain carries Phosphothreonine. A disordered region spans residues 621-647; sequence VPPYSESKHRLQKQRRKERQKTAGNGW. Lys628 participates in a covalent cross-link: Glycyl lysine isopeptide (Lys-Gly) (interchain with G-Cter in SUMO2). Over residues 630 to 639 the composition is skewed to basic residues; it reads RLQKQRRKER. Glycyl lysine isopeptide (Lys-Gly) (interchain with G-Cter in SUMO2) cross-links involve residues Lys651, Lys660, Lys688, and Lys733.

Forms a ternary complex with DNTT and core histone; interaction with PCNA releases DNTT and H2A/H2B histones from this ternary complex. Interacts with ESR1, ESR2, PPARG and RXRA. Part of the small subunit (SSU) processome, composed of more than 70 proteins and the RNA chaperone small nucleolar RNA (snoRNA) U3.

It is found in the nucleus. Its subcellular location is the nucleolus. Its function is as follows. Regulates the transcriptional activity of DNTT and ESR1. May function as a chromatin remodeling protein. Part of the small subunit (SSU) processome, first precursor of the small eukaryotic ribosomal subunit. During the assembly of the SSU processome in the nucleolus, many ribosome biogenesis factors, an RNA chaperone and ribosomal proteins associate with the nascent pre-rRNA and work in concert to generate RNA folding, modifications, rearrangements and cleavage as well as targeted degradation of pre-ribosomal RNA by the RNA exosome. In Mus musculus (Mouse), this protein is Deoxynucleotidyltransferase terminal-interacting protein 2 (Dnttip2).